A 205-amino-acid chain; its full sequence is Urease accessory protein UreE (205 aa).

Residues 178 to 196 (AHFHAGGHGHVHSGHGHGG) show a composition bias toward basic residues. The disordered stretch occupies residues 178-205 (AHFHAGGHGHVHSGHGHGGKHGEHDAES).

The protein belongs to the UreE family.

The protein localises to the cytoplasm. Functionally, involved in urease metallocenter assembly. Binds nickel. Probably functions as a nickel donor during metallocenter assembly. The sequence is that of Urease accessory protein UreE from Bordetella pertussis (strain Tohama I / ATCC BAA-589 / NCTC 13251).